A 549-amino-acid chain; its full sequence is Eukaryotic translation initiation factor 3 subunit D (549 aa).

Residues 101-130 (QSYQRGRARGQRGRGARGARTPGGMTTLNK) form a disordered region. Positions 106 to 117 (GRARGQRGRGAR) are enriched in basic residues. The tract at residues 277–291 (EFDLLTVNETSVEPP) is RNA gate. The tract at residues 521–549 (ESDASEESGDEQADTPFAPLYSYGNSKRV) is disordered. The span at 523-533 (DASEESGDEQA) shows a compositional bias: acidic residues.

The protein belongs to the eIF-3 subunit D family. As to quaternary structure, component of the eukaryotic translation initiation factor 3 (eIF-3) complex.

It localises to the cytoplasm. Its function is as follows. mRNA cap-binding component of the eukaryotic translation initiation factor 3 (eIF-3) complex, which is involved in protein synthesis of a specialized repertoire of mRNAs and, together with other initiation factors, stimulates binding of mRNA and methionyl-tRNAi to the 40S ribosome. The eIF-3 complex specifically targets and initiates translation of a subset of mRNAs involved in cell proliferation. In the eIF-3 complex, eif3d specifically recognizes and binds the 7-methylguanosine cap of a subset of mRNAs. This chain is Eukaryotic translation initiation factor 3 subunit D, found in Bombyx mori (Silk moth).